A 171-amino-acid chain; its full sequence is Adenine phosphoribosyltransferase (171 aa).

The protein belongs to the purine/pyrimidine phosphoribosyltransferase family. In terms of assembly, homodimer.

The protein localises to the cytoplasm. The catalysed reaction is AMP + diphosphate = 5-phospho-alpha-D-ribose 1-diphosphate + adenine. Its pathway is purine metabolism; AMP biosynthesis via salvage pathway; AMP from adenine: step 1/1. In terms of biological role, catalyzes a salvage reaction resulting in the formation of AMP, that is energically less costly than de novo synthesis. This is Adenine phosphoribosyltransferase from Natranaerobius thermophilus (strain ATCC BAA-1301 / DSM 18059 / JW/NM-WN-LF).